Reading from the N-terminus, the 354-residue chain is MSRSTYSLEQLADFLKVEFQGNGATLLSGVEEIEEAKTAHITFLDNEKYAKHLKSSEAGAIIISRTQFQKYRDLNKNFLITSESPSLVFQKCLELFITPVDSGFPGIHPTAVIHPTAIIEDHVCIEPYAVVCQHAHVGSACHIGSGSVIGAYSTVGQHSYIHPRVVIRERVSIGKRVIIQPGAVIGSCGFGYVTSAFGQHKHLKHLGKVIIEDDVEIGANTTIDRGRFKHSVVREGSKIDNLVQIAHQVEVGQHSMIVAQAGIAGSTKIGNHVIIGGQAGITGHICIADHVIMMAQTGVTKSITSPGIYGGAPARPYQEIHRQVAKVRNLPRLEERIAALEKLVQKLEALSEQH.

The Proton acceptor role is filled by H247.

Belongs to the transferase hexapeptide repeat family. LpxD subfamily. As to quaternary structure, homotrimer.

The enzyme catalyses a UDP-3-O-[(3R)-3-hydroxyacyl]-alpha-D-glucosamine + a (3R)-hydroxyacyl-[ACP] = a UDP-2-N,3-O-bis[(3R)-3-hydroxyacyl]-alpha-D-glucosamine + holo-[ACP] + H(+). It participates in bacterial outer membrane biogenesis; LPS lipid A biosynthesis. Functionally, catalyzes the N-acylation of UDP-3-O-acylglucosamine using 3-hydroxyacyl-ACP as the acyl donor. Is involved in the biosynthesis of lipid A, a phosphorylated glycolipid that anchors the lipopolysaccharide to the outer membrane of the cell. The protein is UDP-3-O-acylglucosamine N-acyltransferase of Chlamydia trachomatis serovar L2b (strain UCH-1/proctitis).